Here is a 338-residue protein sequence, read N- to C-terminus: Anthranilate phosphoribosyltransferase (338 aa).

5-phospho-alpha-D-ribose 1-diphosphate contacts are provided by residues glycine 78, 81–82 (GD), threonine 86, 88–91 (NIST), 106–114 (KHGNRSVSS), and serine 118. Glycine 78 contacts anthranilate. Residue serine 90 participates in Mg(2+) binding. Residue asparagine 109 participates in anthranilate binding. Arginine 164 is an anthranilate binding site. Aspartate 223 and glutamate 224 together coordinate Mg(2+).

It belongs to the anthranilate phosphoribosyltransferase family. As to quaternary structure, homodimer. Mg(2+) serves as cofactor.

It carries out the reaction N-(5-phospho-beta-D-ribosyl)anthranilate + diphosphate = 5-phospho-alpha-D-ribose 1-diphosphate + anthranilate. Its pathway is amino-acid biosynthesis; L-tryptophan biosynthesis; L-tryptophan from chorismate: step 2/5. Its function is as follows. Catalyzes the transfer of the phosphoribosyl group of 5-phosphorylribose-1-pyrophosphate (PRPP) to anthranilate to yield N-(5'-phosphoribosyl)-anthranilate (PRA). This Bacillus velezensis (strain DSM 23117 / BGSC 10A6 / LMG 26770 / FZB42) (Bacillus amyloliquefaciens subsp. plantarum) protein is Anthranilate phosphoribosyltransferase.